Reading from the N-terminus, the 298-residue chain is Tyrosine recombinase XerC (298 aa).

Positions 2–88 (TDLHTDVERY…ALRSFFDWLV (87 aa)) constitute a Core-binding (CB) domain. The Tyr recombinase domain maps to 109 to 288 (HLPKNIDVDD…DFQHLASVYD (180 aa)). Active-site residues include Arg-148, Lys-172, His-240, Arg-243, and His-266. Tyr-275 functions as the O-(3'-phospho-DNA)-tyrosine intermediate in the catalytic mechanism.

This sequence belongs to the 'phage' integrase family. XerC subfamily. In terms of assembly, forms a cyclic heterotetrameric complex composed of two molecules of XerC and two molecules of XerD, in which XerC interacts with XerD via its C-terminal region, XerD interacts with XerC via its C-terminal region and so on.

It localises to the cytoplasm. With respect to regulation, ftsK may regulate the catalytic switch between XerC and XerD in the heterotetrameric complex during the two steps of the recombination process. Its function is as follows. Site-specific tyrosine recombinase, which acts by catalyzing the cutting and rejoining of the recombining DNA molecules. Binds cooperatively to specific DNA consensus sequences that are separated from XerD binding sites by a short central region, forming the heterotetrameric XerC-XerD complex that recombines DNA substrates. The complex is essential to convert dimers of the bacterial chromosome into monomers to permit their segregation at cell division. It also contributes to the segregational stability of plasmids. In the complex XerC specifically exchanges the top DNA strands. The chain is Tyrosine recombinase XerC from Escherichia coli O6:K15:H31 (strain 536 / UPEC).